A 389-amino-acid polypeptide reads, in one-letter code: PqqA peptide cyclase (389 aa).

The Radical SAM core domain maps to 19 to 234; it reads VGLPLWLLAE…TNEYRARLEA (216 aa). [4Fe-4S] cluster contacts are provided by Cys33, Cys37, and Cys40.

It belongs to the radical SAM superfamily. PqqE family. In terms of assembly, interacts with PqqD. The interaction is necessary for activity of PqqE. The cofactor is [4Fe-4S] cluster.

The catalysed reaction is [PQQ precursor protein] + S-adenosyl-L-methionine = E-Y cross-linked-[PQQ precursor protein] + 5'-deoxyadenosine + L-methionine + H(+). The protein operates within cofactor biosynthesis; pyrroloquinoline quinone biosynthesis. Catalyzes the cross-linking of a glutamate residue and a tyrosine residue in the PqqA protein as part of the biosynthesis of pyrroloquinoline quinone (PQQ). The polypeptide is PqqA peptide cyclase (Pseudomonas syringae pv. syringae (strain B728a)).